The chain runs to 562 residues: Urease subunit alpha (562 aa).

One can recognise a Urease domain in the interval 131 to 562 (GGMDCHIHFI…LPMAQRYFLF (432 aa)). Residues H136, H138, and K219 each coordinate Ni(2+). K219 is modified (N6-carboxylysine). H221 lines the substrate pocket. 2 residues coordinate Ni(2+): H248 and H274. H322 acts as the Proton donor in catalysis. D362 contacts Ni(2+).

The protein belongs to the metallo-dependent hydrolases superfamily. Urease alpha subunit family. Heterotrimer of UreA (gamma), UreB (beta) and UreC (alpha) subunits. Three heterotrimers associate to form the active enzyme. It depends on Ni cation as a cofactor. Carboxylation allows a single lysine to coordinate two nickel ions.

The protein resides in the cytoplasm. It catalyses the reaction urea + 2 H2O + H(+) = hydrogencarbonate + 2 NH4(+). It participates in nitrogen metabolism; urea degradation; CO(2) and NH(3) from urea (urease route): step 1/1. The polypeptide is Urease subunit alpha (Paracoccus denitrificans (strain Pd 1222)).